The chain runs to 370 residues: Muconate cycloisomerase 1 (370 aa).

K166 is an active-site residue. Mn(2+) contacts are provided by D195, E221, and D246.

This sequence belongs to the mandelate racemase/muconate lactonizing enzyme family. In terms of assembly, homooctamer. It depends on Mn(2+) as a cofactor.

It carries out the reaction (S)-muconolactone = cis,cis-muconate + H(+). Its pathway is aromatic compound metabolism; beta-ketoadipate pathway; 5-oxo-4,5-dihydro-2-furylacetate from catechol: step 2/3. Its function is as follows. Catalyzes a syn cycloisomerization. This Acinetobacter baylyi (strain ATCC 33305 / BD413 / ADP1) protein is Muconate cycloisomerase 1 (catB).